We begin with the raw amino-acid sequence, 193 residues long: Serine recombinase gin (193 aa).

The Resolvase/invertase-type recombinase catalytic domain occupies 1–134 (MLIGYVRVST…AGLAAARNKG (134 aa)). The O-(5'-phospho-DNA)-serine intermediate role is filled by serine 9. Positions 138–183 (GRPPKLTKAEWEQAGRLLAQGIPRKQVALIYDVALSTLYKKHPAKR) form a DNA-binding region, H-T-H motif.

Belongs to the site-specific recombinase resolvase family. In terms of assembly, homodimer. During inversion, two dimers associate to form a homotetramer.

The protein localises to the host cytoplasm. Its function is as follows. Performs inversion of a viral 3 kp segment (G-segment) that encodes two alternate pairs of tail fiber proteins thereby modifying the host specificity of the virus. Binds as a dimer to the viral gix sites which are 34-bp palindromic sequences that flank the invertible G-segment. Catalyzes site-specific recombination in the presence of the host factor Fis. Gin dimers bound to each of the gix sites and host factor Fis bound to the enhancer come together to form the synaptic complex. Each Gin monomer introduces a nick and becomes covalently attached to the 5'-phosphate of the DNA, resulting in double-stranded staggered breaks at both recombination sites. A 180 degrees rotation of one of the two Gin dimers followed by religation of the DNA leads to the inversion of the G-segment (G+ or G- orientation). This Escherichia phage Mu (Bacteriophage Mu) protein is Serine recombinase gin (gin).